The chain runs to 545 residues: Glucose-6-phosphate isomerase (545 aa).

Catalysis depends on Glu-343, which acts as the Proton donor. Catalysis depends on residues His-374 and Lys-513.

Belongs to the GPI family.

Its subcellular location is the cytoplasm. The enzyme catalyses alpha-D-glucose 6-phosphate = beta-D-fructose 6-phosphate. Its pathway is carbohydrate biosynthesis; gluconeogenesis. The protein operates within carbohydrate degradation; glycolysis; D-glyceraldehyde 3-phosphate and glycerone phosphate from D-glucose: step 2/4. In terms of biological role, catalyzes the reversible isomerization of glucose-6-phosphate to fructose-6-phosphate. The sequence is that of Glucose-6-phosphate isomerase from Methylibium petroleiphilum (strain ATCC BAA-1232 / LMG 22953 / PM1).